A 37-amino-acid polypeptide reads, in one-letter code: Large ribosomal subunit protein bL36c (37 aa).

The protein belongs to the bacterial ribosomal protein bL36 family.

The protein localises to the plastid. It is found in the chloroplast. This is Large ribosomal subunit protein bL36c from Pelargonium hortorum (Common geranium).